The following is a 189-amino-acid chain: Elongation factor P (189 aa).

The protein belongs to the elongation factor P family.

The protein localises to the cytoplasm. It functions in the pathway protein biosynthesis; polypeptide chain elongation. In terms of biological role, involved in peptide bond synthesis. Stimulates efficient translation and peptide-bond synthesis on native or reconstituted 70S ribosomes in vitro. Probably functions indirectly by altering the affinity of the ribosome for aminoacyl-tRNA, thus increasing their reactivity as acceptors for peptidyl transferase. The chain is Elongation factor P from Campylobacter lari (strain RM2100 / D67 / ATCC BAA-1060).